We begin with the raw amino-acid sequence, 343 residues long: Tetraacyldisaccharide 4'-kinase (343 aa).

Residue 61-68 (GVGGNGKT) coordinates ATP.

Belongs to the LpxK family.

The catalysed reaction is a lipid A disaccharide + ATP = a lipid IVA + ADP + H(+). It functions in the pathway glycolipid biosynthesis; lipid IV(A) biosynthesis; lipid IV(A) from (3R)-3-hydroxytetradecanoyl-[acyl-carrier-protein] and UDP-N-acetyl-alpha-D-glucosamine: step 6/6. Transfers the gamma-phosphate of ATP to the 4'-position of a tetraacyldisaccharide 1-phosphate intermediate (termed DS-1-P) to form tetraacyldisaccharide 1,4'-bis-phosphate (lipid IVA). The protein is Tetraacyldisaccharide 4'-kinase of Colwellia psychrerythraea (strain 34H / ATCC BAA-681) (Vibrio psychroerythus).